The sequence spans 414 residues: Tyrosine--tRNA ligase (414 aa).

The 'HIGH' region signature appears at 57–66 (PSAPDVHIGH). Residues 241 to 245 (KMSKS) carry the 'KMSKS' region motif. Residue lysine 244 coordinates ATP. Positions 352–413 (VPLIDLLVTL…GKRKFAKLSL (62 aa)) constitute an S4 RNA-binding domain.

This sequence belongs to the class-I aminoacyl-tRNA synthetase family. TyrS type 2 subfamily. Homodimer.

Its subcellular location is the cytoplasm. It catalyses the reaction tRNA(Tyr) + L-tyrosine + ATP = L-tyrosyl-tRNA(Tyr) + AMP + diphosphate + H(+). Functionally, catalyzes the attachment of tyrosine to tRNA(Tyr) in a two-step reaction: tyrosine is first activated by ATP to form Tyr-AMP and then transferred to the acceptor end of tRNA(Tyr). The protein is Tyrosine--tRNA ligase of Shouchella clausii (strain KSM-K16) (Alkalihalobacillus clausii).